We begin with the raw amino-acid sequence, 333 residues long: Holliday junction branch migration complex subunit RuvB (333 aa).

Residues 1-181 (MARILDNDLL…FGINGHMEYY (181 aa)) form a large ATPase domain (RuvB-L) region. ATP contacts are provided by residues leucine 20, arginine 21, glycine 62, lysine 65, threonine 66, threonine 67, 128–130 (EDY), arginine 171, tyrosine 181, and arginine 218. Mg(2+) is bound at residue threonine 66. The segment at 130–148 (YYIDIMIGAGETSRSVHLD) is presensor-1 beta-hairpin. Residues 182–252 (ELPDLTEIVE…IADQALTMLD (71 aa)) form a small ATPAse domain (RuvB-S) region. Positions 255–333 (HEGLDYVDQK…HMGYDYTRDN (79 aa)) are head domain (RuvB-H). DNA-binding residues include arginine 291, arginine 310, arginine 312, and arginine 315.

Belongs to the RuvB family. In terms of assembly, homohexamer. Forms an RuvA(8)-RuvB(12)-Holliday junction (HJ) complex. HJ DNA is sandwiched between 2 RuvA tetramers; dsDNA enters through RuvA and exits via RuvB. Only 4 subunits contact one DNA strand at any time. Two adjacent subunits are contacted by domain III of RuvA. An RuvB hexamer assembles on each DNA strand where it exits the tetramer. Each RuvB hexamer is contacted by two RuvA subunits (via domain III) on 2 adjacent RuvB subunits; this complex drives branch migration. In the full resolvosome a probable DNA-RuvA(4)-RuvB(12)-RuvC(2) complex forms which resolves the HJ.

The protein localises to the cytoplasm. The enzyme catalyses ATP + H2O = ADP + phosphate + H(+). Binding of domain III of RuvA to a single subunit of the RuvB hexamer activates the ATPase 2 subunits away and nucleotide exchange in the adjacent subunit. In terms of biological role, the RuvA-RuvB-RuvC complex processes Holliday junction (HJ) DNA during genetic recombination and DNA repair, while the RuvA-RuvB complex plays an important role in the rescue of blocked DNA replication forks via replication fork reversal (RFR). Catalyzes branch migration on Holliday junction (HJ) DNA in complex with RuvA from S.typhimurim and ATP. RuvA specifically binds to HJ cruciform DNA, conferring on it an open structure. The RuvB hexamer acts as an ATP-dependent pump, pulling dsDNA into and through the RuvAB complex. Forms 2 homohexamers on either side of HJ DNA bound by 1 or 2 RuvA tetramers; 4 subunits per hexamer contact DNA at a time. Coordinated motions by a converter formed by DNA-disengaged RuvB subunits stimulates ATP hydrolysis and nucleotide exchange. Immobilization of the converter enables RuvB to convert the ATP-contained energy into a lever motion, pulling 2 nucleotides of DNA out of the RuvA tetramer per ATP hydrolyzed, thus driving DNA branch migration. The RuvB motors rotate together with the DNA substrate, which together with the progressing nucleotide cycle forms the mechanistic basis for DNA recombination by continuous branch migration. Branch migration allows RuvC to scan DNA until it finds its consensus sequence, where it cleaves and resolves cruciform DNA. In Streptococcus thermophilus (strain ATCC BAA-250 / LMG 18311), this protein is Holliday junction branch migration complex subunit RuvB.